Here is a 204-residue protein sequence, read N- to C-terminus: MVKKEVKPIDITATLRCKVAVVGEATVGKSALISMFTSKGSKFLKDYAMTSGVEVVVAPVTIPDTTVSVELFLLDTAGSDLYKEQISQYWNGVYYAILVFDVSSMESFESCKAWFELLKSARPDRERPLRAVLVANKTDLPPQRHQVRLDMAQDWATTNTLDFFDVSANPPGKDADAPFLSIATTFYRNYEDKVAAFQDACRNY.

Residues 23–30 (GEATVGKS), 75–79 (DTAGS), and 136–139 (NKTD) contribute to the GTP site.

This sequence belongs to the small GTPase superfamily. Rab family. In terms of assembly, component of the IFT complex B, the core composed of IFT25, IFT27, IFT46, IFT52, IFT74, IFT81 and IFT88 as well as associated subunits IFT20, IFT57, IFT80 and IFT172. Interacts with IFT25; the interaction is direct.

It localises to the cell projection. The protein resides in the cilium. It is found in the flagellum. The protein localises to the cytoplasm. Its subcellular location is the cytoskeleton. It localises to the flagellum basal body. Its function is as follows. Small GTPase-like component of the intraflagellar transport (IFT) complex B. Forms a subcomplex within the IFT complex B with IFT25. Has very low GTPase activity either because it lacks the conserved catalytic Gln in position 79 or because it requires some GTPase-activating protein (GAP) for GTP turnover. The chain is Intraflagellar transport protein 27 (IFT27) from Chlamydomonas reinhardtii (Chlamydomonas smithii).